The primary structure comprises 1237 residues: Anion exchange protein 2 (1237 aa).

The interval methionine 1–isoleucine 237 is disordered. The Cytoplasmic segment spans residues methionine 1–cysteine 704. Composition is skewed to basic and acidic residues over residues glutamate 37–glutamate 49 and glycine 58–arginine 75. Basic residues-rich tracts occupy residues glutamine 76 to leucine 85 and arginine 94 to proline 110. Phosphoserine occurs at positions 113, 132, 144, 170, and 172. A compositionally biased stretch (acidic residues) spans threonine 120–glutamate 133. Positions alanine 137 to serine 151 are enriched in low complexity. Residues glycine 205–serine 215 are compositionally biased toward gly residues. Serine 239 bears the Phosphoserine mark. Position 253 is a phosphothreonine (threonine 253). Lysine 270 carries the post-translational modification N6-methyllysine. The disordered stretch occupies residues arginine 286–proline 316. Position 439 is a phosphoserine (serine 439). Residues serine 445–isoleucine 466 form a disordered region. The interval cysteine 704 to valine 1237 is membrane (anion exchange). Helical transmembrane passes span leucine 705–leucine 725, phenylalanine 750–phenylalanine 770, isoleucine 792–valine 812, and isoleucine 822–isoleucine 842. The Extracellular segment spans residues phenylalanine 843 to glutamine 893. N-linked (GlcNAc...) asparagine glycans are attached at residues asparagine 855, asparagine 864, and asparagine 878. The helical transmembrane segment at proline 894–leucine 914 threads the bilayer. Topologically, residues arginine 915 to arginine 929 are cytoplasmic. 5 helical membrane passes run valine 930–isoleucine 950, phenylalanine 985–phenylalanine 1005, leucine 1032–alanine 1052, arginine 1086–leucine 1106, and isoleucine 1109–isoleucine 1129. Cysteine 1169 carries S-palmitoyl cysteine lipidation. A helical transmembrane segment spans residues leucine 1170 to isoleucine 1190.

It belongs to the anion exchanger (TC 2.A.31) family.

The protein resides in the apical cell membrane. Its subcellular location is the basolateral cell membrane. The enzyme catalyses hydrogencarbonate(in) + chloride(out) = hydrogencarbonate(out) + chloride(in). Its function is as follows. Sodium-independent anion exchanger which mediates the electroneutral exchange of chloride for bicarbonate ions across the cell membrane. Plays an important role in osteoclast differentiation and function. Regulates bone resorption and calpain-dependent actin cytoskeleton organization in osteoclasts via anion exchange-dependent control of pH. Essential for intracellular pH regulation in CD8(+) T-cells upon CD3 stimulation, modulating CD8(+) T-cell response. This Equus caballus (Horse) protein is Anion exchange protein 2 (SLC4A2).